The chain runs to 188 residues: Peptide deformylase (188 aa).

Fe cation-binding residues include Cys94 and His136. The active site involves Glu137. Fe cation is bound at residue His140.

It belongs to the polypeptide deformylase family. Fe(2+) is required as a cofactor.

The enzyme catalyses N-terminal N-formyl-L-methionyl-[peptide] + H2O = N-terminal L-methionyl-[peptide] + formate. In terms of biological role, removes the formyl group from the N-terminal Met of newly synthesized proteins. Requires at least a dipeptide for an efficient rate of reaction. N-terminal L-methionine is a prerequisite for activity but the enzyme has broad specificity at other positions. This Pelodictyon phaeoclathratiforme (strain DSM 5477 / BU-1) protein is Peptide deformylase.